Here is a 1012-residue protein sequence, read N- to C-terminus: MRRSTDPRNLLVRRGPLLVDGESAISELDPGFFPTGDAPKMSSTTRRRFNLIAFTPGPVTVISSLVYLALLIPLLLVHTIVPSAPKSNPKGVDLSEAWNDLQHLTSGFHPYNSHRNDEIHQWLLQRVGHILDASRKAHEDDAMGSVAPDVFVFDDQQSNLTFSGGGVGNKPITGVYFEGKNIIVYIRGLEDDKENWWDSPGGKPKGKGGVLVNAHYDSVSTGFGATDDGVGVVSVLQLIKFFTSPGNLPRKGLVLLLNNGEEDYLNGARAYSQHPLSKYTHTFLNLEGAGAGGRAALFRTTDTEVTRFYKSSPHPFGSVLAADGFKMGLIRSETDYAVFKGVLGLRGLDVAFIEPRARYHTDQDDVRHTSIDSVWHMLSAAIATTKGLVSYTGSEFDGRAPGKGMVNSGVGTHGVWFDLFGSSFAVFRLHTLFAISVTLLVVCPIVLFVIGIILSKMDKMYLFSIHETIPETKEKVSVRGLRGLFRYPIILVVSSGILIGLSYLLAKVNPFIVHSSSYAVWSMMLSSWIFMTWFLSCIADFFRPSALHRAYTFTWQLLVMWVLLVISTVYVNQHDIAAGYFIVFYFAGTFLATLISYLELFALPNKTQYAREQSQYPSRLGSNRSSRILSPSADELPTGGDNNGEIYDGEEEPTESSSLLGRQRRTTFANYTRTGRDLASSESGTYEDHSETGVFGEEQKWSASLPTWTWVLQFLFVGPVVIMFIGQLGLFLTSAMNQVGADGVGLLVVYIAIAVFSVLLLIPLSPFIHRFTYHVPTFLLLVFIATLIYNLAAFPFSAENRLKIFFVQELNLDTGRNQVSLTGVDPYVQDIIRAIPSASKENISCDSELDSGRRKCSWPGLAPEVVQDEPTDRWLSFNISKPSSQETKDTPVLHARLHVSGKNTRACRVNFERPIRDYSLPGSALDDRMPHTLPQGISEIRLWSRTWENVWTVDVQWDAEDMDELHGRVVCLWSDANQLGSIPALDELRLFAPPWVAISKLKDGLVEVSRGF.

Topologically, residues 1–60 are cytoplasmic; the sequence is MRRSTDPRNLLVRRGPLLVDGESAISELDPGFFPTGDAPKMSSTTRRRFNLIAFTPGPVT. The chain crosses the membrane as a helical span at residues 61-81; the sequence is VISSLVYLALLIPLLLVHTIV. At 82-432 the chain is on the vacuolar side; it reads PSAPKSNPKG…SFAVFRLHTL (351 aa). N-linked (GlcNAc...) asparagine glycosylation is present at Asn-159. Residues His-215 and Asp-227 each contribute to the Zn(2+) site. The active-site Proton acceptor is the Glu-261. Zn(2+) is bound by residues Glu-262, Glu-287, and His-360. Residues 433 to 453 traverse the membrane as a helical segment; it reads FAISVTLLVVCPIVLFVIGII. Over 454–487 the chain is Cytoplasmic; that stretch reads LSKMDKMYLFSIHETIPETKEKVSVRGLRGLFRY. The chain crosses the membrane as a helical span at residues 488–508; sequence PIILVVSSGILIGLSYLLAKV. At 509-518 the chain is on the vacuolar side; that stretch reads NPFIVHSSSY. A helical transmembrane segment spans residues 519–539; sequence AVWSMMLSSWIFMTWFLSCIA. The Cytoplasmic portion of the chain corresponds to 540 to 550; it reads DFFRPSALHRA. Residues 551-571 form a helical membrane-spanning segment; it reads YTFTWQLLVMWVLLVISTVYV. Residues 572-575 are Vacuolar-facing; that stretch reads NQHD. A helical transmembrane segment spans residues 576–596; the sequence is IAAGYFIVFYFAGTFLATLIS. Topologically, residues 597–710 are cytoplasmic; sequence YLELFALPNK…WSASLPTWTW (114 aa). The span at 614 to 629 shows a compositional bias: polar residues; it reads SQYPSRLGSNRSSRIL. Positions 614–660 are disordered; sequence SQYPSRLGSNRSSRILSPSADELPTGGDNNGEIYDGEEEPTESSSLL. The helical transmembrane segment at 711-731 threads the bilayer; it reads VLQFLFVGPVVIMFIGQLGLF. Topologically, residues 732-743 are vacuolar; that stretch reads LTSAMNQVGADG. Residues 744–764 traverse the membrane as a helical segment; it reads VGLLVVYIAIAVFSVLLLIPL. At 765–777 the chain is on the cytoplasmic side; it reads SPFIHRFTYHVPT. A helical membrane pass occupies residues 778-798; sequence FLLLVFIATLIYNLAAFPFSA. Topologically, residues 799 to 1012 are vacuolar; sequence ENRLKIFFVQ…DGLVEVSRGF (214 aa). N-linked (GlcNAc...) asparagine glycosylation is found at Asn-842 and Asn-878.

This sequence belongs to the peptidase M28 family. The cofactor is Zn(2+).

Its subcellular location is the vacuole membrane. Its function is as follows. May be involved in vacuolar sorting and osmoregulation. In Coccidioides posadasii (strain RMSCC 757 / Silveira) (Valley fever fungus), this protein is Vacuolar membrane protease.